We begin with the raw amino-acid sequence, 352 residues long: Probable dual-specificity RNA methyltransferase RlmN (352 aa).

The Proton acceptor role is filled by Glu-99. Residues 105 to 325 form the Radical SAM core domain; that stretch reads EGDRATLCIS…ESHGYTCTIR (221 aa). Residues Cys-112 and Cys-336 are joined by a disulfide bond. 3 residues coordinate [4Fe-4S] cluster: Cys-119, Cys-123, and Cys-126. S-adenosyl-L-methionine contacts are provided by residues 164–165, Ser-196, 217–219, and His-293; these read GE and SLH. The S-methylcysteine intermediate role is filled by Cys-336.

It belongs to the radical SAM superfamily. RlmN family. It depends on [4Fe-4S] cluster as a cofactor.

The protein resides in the cytoplasm. The enzyme catalyses adenosine(2503) in 23S rRNA + 2 reduced [2Fe-2S]-[ferredoxin] + 2 S-adenosyl-L-methionine = 2-methyladenosine(2503) in 23S rRNA + 5'-deoxyadenosine + L-methionine + 2 oxidized [2Fe-2S]-[ferredoxin] + S-adenosyl-L-homocysteine. It catalyses the reaction adenosine(37) in tRNA + 2 reduced [2Fe-2S]-[ferredoxin] + 2 S-adenosyl-L-methionine = 2-methyladenosine(37) in tRNA + 5'-deoxyadenosine + L-methionine + 2 oxidized [2Fe-2S]-[ferredoxin] + S-adenosyl-L-homocysteine. Functionally, specifically methylates position 2 of adenine 2503 in 23S rRNA and position 2 of adenine 37 in tRNAs. The protein is Probable dual-specificity RNA methyltransferase RlmN of Porphyromonas gingivalis (strain ATCC 33277 / DSM 20709 / CIP 103683 / JCM 12257 / NCTC 11834 / 2561).